Consider the following 286-residue polypeptide: Centromere protein P (286 aa).

Positions 1 to 73 form a coiled coil; it reads MDSETRELRA…RSEHSFLSKL (73 aa). Ser38 is modified (phosphoserine).

It belongs to the CENP-P/CTF19 family. Component of the CENPA-CAD complex, composed of CENPI, CENPK, CENPL, CENPO, CENPP, CENPQ, CENPR and CENPS. The CENPA-CAD complex interacts with the CENPA-NAC complex, at least composed of CENPA, CENPC, CENPH, CENPM, CENPN, CENPT and CENPU.

The protein localises to the nucleus. The protein resides in the chromosome. It is found in the centromere. Functionally, component of the CENPA-CAD (nucleosome distal) complex, a complex recruited to centromeres which is involved in assembly of kinetochore proteins, mitotic progression and chromosome segregation. May be involved in incorporation of newly synthesized CENPA into centromeres via its interaction with the CENPA-NAC complex. The sequence is that of Centromere protein P (Cenpp) from Mus musculus (Mouse).